The sequence spans 215 residues: Hibernation-associated plasma protein HP-27 (215 aa).

The N-terminal stretch at 1–30 (MYEAGKRASFMGGAGIWILALSVLMHVVCS) is a signal peptide. Residues 34 to 79 (GNPESCNVPGPQGPPGMRGPPGTPGKPGPPGWNGFPGLPGPPGPPG) form a disordered region. The Collagen-like domain occupies 43–81 (GPQGPPGMRGPPGTPGKPGPPGWNGFPGLPGPPGPPGMT). The span at 44-63 (PQGPPGMRGPPGTPGKPGPP) shows a compositional bias: pro residues. The C1q domain maps to 85–215 (HSKGTSAFAV…VFSGFLIHEN (131 aa)). N155 carries an N-linked (GlcNAc...) asparagine glycan.

As to expression, plasma; synthesized in the liver.

The protein resides in the secreted. In terms of biological role, plasma proteins HP-20, HP-25, HP-27 and HP-55 form a 140 kDa complex via disulfide bonds in the plasma and are hibernation specific. The chain is Hibernation-associated plasma protein HP-27 from Tamias sibiricus (Siberian chipmunk).